The primary structure comprises 610 residues: Elongation factor 4 (610 aa).

Residues 11–193 (EKIRNFSIIA…QIVEKVPAPT (183 aa)) enclose the tr-type G domain. GTP is bound by residues 23–28 (DHGKST) and 140–143 (NKID).

It belongs to the TRAFAC class translation factor GTPase superfamily. Classic translation factor GTPase family. LepA subfamily.

It localises to the cell membrane. It carries out the reaction GTP + H2O = GDP + phosphate + H(+). In terms of biological role, required for accurate and efficient protein synthesis under certain stress conditions. May act as a fidelity factor of the translation reaction, by catalyzing a one-codon backward translocation of tRNAs on improperly translocated ribosomes. Back-translocation proceeds from a post-translocation (POST) complex to a pre-translocation (PRE) complex, thus giving elongation factor G a second chance to translocate the tRNAs correctly. Binds to ribosomes in a GTP-dependent manner. This is Elongation factor 4 from Streptococcus suis (strain 98HAH33).